The sequence spans 99 residues: Cell cycle protein GpsB (99 aa).

Positions 34-71 form a coiled coil; the sequence is LDMIIKDYETFHQEIEELQQENLQLKKQLEEASKKQPV.

It belongs to the GpsB family. Forms polymers through the coiled coil domains. Interacts with PBP1, MreC and EzrA.

Its subcellular location is the cytoplasm. Its function is as follows. Divisome component that associates with the complex late in its assembly, after the Z-ring is formed, and is dependent on DivIC and PBP2B for its recruitment to the divisome. Together with EzrA, is a key component of the system that regulates PBP1 localization during cell cycle progression. Its main role could be the removal of PBP1 from the cell pole after pole maturation is completed. Also contributes to the recruitment of PBP1 to the division complex. Not essential for septum formation. In Bacillus velezensis (strain DSM 23117 / BGSC 10A6 / LMG 26770 / FZB42) (Bacillus amyloliquefaciens subsp. plantarum), this protein is Cell cycle protein GpsB.